A 382-amino-acid chain; its full sequence is Draxin-A (382 aa).

The signal sequence occupies residues 1–22 (MMSSSWCLPLALLFSTLAVSHS). 3 disordered regions span residues 28 to 213 (THAK…PPSP), 233 to 252 (LPTLPPASTKPQKSGRGKMQ), and 275 to 297 (VDAWPSSRKKDKRRSKNLSSGNV). Over residues 73-82 (RGAKASSGAG) the composition is skewed to low complexity. Over residues 139–149 (GPRKGRGQGHG) the composition is skewed to basic residues. Residues 190 to 201 (SVSSAAAATSPS) are compositionally biased toward low complexity. Basic residues predominate over residues 281-290 (SRKKDKRRSK). N-linked (GlcNAc...) asparagine glycosylation is found at N291 and N296.

This sequence belongs to the draxin family.

The protein resides in the secreted. Its function is as follows. Chemorepulsive axon guidance protein required for the development of spinal cord and forebrain commissures. Acts as a chemorepulsive guidance protein for commissural axons during development. Able to inhibit or repel neurite outgrowth from dorsal spinal cord. In Salmo salar (Atlantic salmon), this protein is Draxin-A (draxin-A).